Here is a 331-residue protein sequence, read N- to C-terminus: MAVFTAVSDADLALWMRHYDLGDVVAFRGIPSGIENSNFFLTTTHGEYVLTIFENLTAGQLPFYIDLMSHLAKHGVPVPAPVARDDGTLFGELHGKPAAIVTKLEGAAELAPGIEHCVEVGQMLARMHLAGRDYPQHQPNLRSLPWWRDAVPAIVPFITGEQRALLEGELAHQAAFFASDDYAALPEGPCHCDLFRDNALFAHAAPDTGHSVRLGGFFDFYFAGCDKWLFDVAVTVNDWCVDLSTGALDAGRADALLRAYQTVRPFTTGERRHWGDMLRAGAYRFWVSRLYDFHLPRAAQMLKPHDPGHFERILRERIAHAGALPETHACN.

It belongs to the pseudomonas-type ThrB family.

It catalyses the reaction L-homoserine + ATP = O-phospho-L-homoserine + ADP + H(+). The protein operates within amino-acid biosynthesis; L-threonine biosynthesis; L-threonine from L-aspartate: step 4/5. The protein is Homoserine kinase of Burkholderia thailandensis (strain ATCC 700388 / DSM 13276 / CCUG 48851 / CIP 106301 / E264).